Here is a 299-residue protein sequence, read N- to C-terminus: Sulfate adenylyltransferase subunit 2 (299 aa).

It belongs to the PAPS reductase family. CysD subfamily. As to quaternary structure, sulfate-activating enzymes, NodP and NodQ, may be physically associated.

The enzyme catalyses sulfate + ATP + H(+) = adenosine 5'-phosphosulfate + diphosphate. Its function is as follows. Proposed to provide activated sulfate for transfer to nod factor. This Rhizobium tropici protein is Sulfate adenylyltransferase subunit 2 (nodP).